Consider the following 263-residue polypeptide: uncharacterized protein (263 aa).

It localises to the mitochondrion. This is an uncharacterized protein from Schizosaccharomyces pombe (strain 972 / ATCC 24843) (Fission yeast).